Reading from the N-terminus, the 384-residue chain is Cytochrome b (384 aa).

A run of 4 helical transmembrane segments spans residues 32 to 52 (FGSLLGVCLVMQLCTGMFLAM), 76 to 98 (WLLRYAHSNGAGFFFMFVYLHMA), 113 to 133 (LWNMGVMMFLLMMMTAFMGYC), and 179 to 199 (FFSLHYLLPFVIAGICCLHLL). The heme b site is built by His-82 and His-96. Positions 183 and 197 each coordinate heme b. Position 202 (His-202) interacts with a ubiquinone. 4 helical membrane passes run 225 to 245 (FLFKDTVTIFAFLFVYFFLIS), 289 to 309 (MMGVLAMLFAILILFVLPFVD), 321 to 341 (LSKILFGFFCVNFILLGLIGA), and 348 to 368 (YIIIGQLATIFYFSYFMILLP).

The protein belongs to the cytochrome b family. In terms of assembly, fungal cytochrome b-c1 complex contains 10 subunits; 3 respiratory subunits, 2 core proteins and 5 low-molecular weight proteins. Cytochrome b-c1 complex is a homodimer. Requires heme b as cofactor.

The protein resides in the mitochondrion inner membrane. In terms of biological role, component of the ubiquinol-cytochrome c reductase complex (complex III or cytochrome b-c1 complex) that is part of the mitochondrial respiratory chain. The b-c1 complex mediates electron transfer from ubiquinol to cytochrome c. Contributes to the generation of a proton gradient across the mitochondrial membrane that is then used for ATP synthesis. This Starmerella bacillaris (Yeast) protein is Cytochrome b (COB).